A 146-amino-acid polypeptide reads, in one-letter code: uncharacterized protein (146 aa).

A helical membrane pass occupies residues 6–26; sequence IPIFVISLSNISHIILAIFFF.

The protein resides in the membrane. This is an uncharacterized protein from Caenorhabditis elegans.